The following is a 367-amino-acid chain: Protein RecA (367 aa).

The span at 1 to 14 (MSTEVNANQSPNAE) shows a compositional bias: polar residues. Positions 1 to 24 (MSTEVNANQSPNAESRQEAARSGE) are disordered. Basic and acidic residues predominate over residues 15–24 (SRQEAARSGE). 84–91 (GPESSGKT) lines the ATP pocket. Residues 348–367 (GSEVSSNSMRPLTTANRKAA) form a disordered region. Polar residues predominate over residues 349-367 (SEVSSNSMRPLTTANRKAA).

It belongs to the RecA family.

The protein resides in the cytoplasm. Can catalyze the hydrolysis of ATP in the presence of single-stranded DNA, the ATP-dependent uptake of single-stranded DNA by duplex DNA, and the ATP-dependent hybridization of homologous single-stranded DNAs. It interacts with LexA causing its activation and leading to its autocatalytic cleavage. In Prochlorococcus marinus (strain MIT 9211), this protein is Protein RecA.